Reading from the N-terminus, the 276-residue chain is Glutamate 5-kinase (276 aa).

Residue K14 coordinates ATP. Substrate is bound by residues S54, D141, and N157. ATP is bound by residues 177-178 (SD) and 219-225 (TGGMLTK).

Belongs to the glutamate 5-kinase family.

The protein localises to the cytoplasm. The catalysed reaction is L-glutamate + ATP = L-glutamyl 5-phosphate + ADP. Its pathway is amino-acid biosynthesis; L-proline biosynthesis; L-glutamate 5-semialdehyde from L-glutamate: step 1/2. Its function is as follows. Catalyzes the transfer of a phosphate group to glutamate to form L-glutamate 5-phosphate. In Listeria monocytogenes serotype 4a (strain HCC23), this protein is Glutamate 5-kinase.